A 110-amino-acid polypeptide reads, in one-letter code: MNYANFGLELFKSIADAAYEGKRVELAGKTLALKNRALDTERDYNYARLAFEKQRFETNADLRVNGDLYRMQALRAAGYRLNPFSNGHQIYADEAAAANLHSYYGFYKTD.

This sequence belongs to the vesivirus VP2 protein family. Homooligomer. The portal-like structure consists in 12 copies of VP2. Interacts with capsid protein VP1.

It localises to the virion. The protein resides in the host cytoplasm. Minor structural protein that forms a portal-like structure at a unique three-fold axis of symmetry, following binding to the host receptor. The channel formed by VP2 may allow the delivery of the viral genome through the host endosomal membrane. The protein is Minor capsid protein VP2 of Otariidae (fur seals &amp; sea lions).